We begin with the raw amino-acid sequence, 322 residues long: Ras association domain-containing protein 4 (322 aa).

A disordered region spans residues 96 to 161 (EASPQDSKVP…SKSRAPSEAQ (66 aa)). Phosphoserine is present on Ser-142. Positions 175 to 264 (YNHKTSVFTP…KIFLMEADLS (90 aa)) constitute a Ras-associating domain. An SARAH domain is found at 271–318 (VAQYIKFEMPVLDSFVEKLKEEEEREIIKLTMKFQALRLTMLQRLEQL).

As to quaternary structure, interacts directly with activated KRAS in a GTP-dependent manner.

Functionally, potential tumor suppressor. May act as a KRAS effector protein. May promote apoptosis and cell cycle arrest. The chain is Ras association domain-containing protein 4 (Rassf4) from Mus musculus (Mouse).